The chain runs to 103 residues: Large ribosomal subunit protein bL21 (103 aa).

This sequence belongs to the bacterial ribosomal protein bL21 family. Part of the 50S ribosomal subunit. Contacts protein L20.

In terms of biological role, this protein binds to 23S rRNA in the presence of protein L20. The protein is Large ribosomal subunit protein bL21 of Pseudomonas paraeruginosa (strain DSM 24068 / PA7) (Pseudomonas aeruginosa (strain PA7)).